The primary structure comprises 299 residues: tRNA uridine(34) hydroxylase (299 aa).

The 95-residue stretch at 132–226 folds into the Rhodanese domain; it reads ASRPVVMLDT…YFEEVGGAHY (95 aa). C186 (cysteine persulfide intermediate) is an active-site residue.

Belongs to the TrhO family.

The catalysed reaction is uridine(34) in tRNA + AH2 + O2 = 5-hydroxyuridine(34) in tRNA + A + H2O. Functionally, catalyzes oxygen-dependent 5-hydroxyuridine (ho5U) modification at position 34 in tRNAs. This is tRNA uridine(34) hydroxylase from Burkholderia pseudomallei (strain K96243).